Here is a 322-residue protein sequence, read N- to C-terminus: Protein mono-ADP-ribosyltransferase PARP16 (322 aa).

Topologically, residues 1–287 (MQPSGWAAAR…RASSQLSWFS (287 aa)) are cytoplasmic. The 87-residue stretch at 5–91 (GWAAAREAAG…AWDLVSWILS (87 aa)) folds into the PARP alpha-helical domain. Aspartate 37 is modified (ADP-ribosyl aspartic acid). An ADP-ribosyl glutamic acid modification is found at glutamate 70. A PARP catalytic domain is found at 94 to 279 (VLTIHSAGKA…VYSQKPPKRA (186 aa)). N6-(ADP-ribosyl)lysine is present on residues lysine 110 and lysine 137. NAD(+) is bound by residues histidine 152, tyrosine 182, and tyrosine 254. The chain crosses the membrane as a helical span at residues 288–308 (SHWFTVMISLYLLLLLIVSVI). At 309–322 (NSSAFQHFWNRAKR) the chain is on the lumenal side.

Belongs to the ARTD/PARP family. In terms of assembly, interacts with KPNB1. In terms of processing, auto-mono-ADP-ribosylated.

The protein localises to the endoplasmic reticulum membrane. The catalysed reaction is L-aspartyl-[protein] + NAD(+) = 4-O-(ADP-D-ribosyl)-L-aspartyl-[protein] + nicotinamide. It carries out the reaction L-glutamyl-[protein] + NAD(+) = 5-O-(ADP-D-ribosyl)-L-glutamyl-[protein] + nicotinamide. The enzyme catalyses L-lysyl-[protein] + NAD(+) = N(6)-(ADP-D-ribosyl)-L-lysyl-[protein] + nicotinamide + H(+). In absence of activation signal, PARP16 is autoinhibited by the PARP alpha-helical domain (also named HD region), which prevents effective NAD(+)-binding. Activity is highly stimulated by signals, which unfold the PARP alpha-helical domain, relieving autoinhibition. In terms of biological role, intracellular mono-ADP-ribosyltransferase that plays a role in different processes, such as protein translation and unfolded protein response (UPR), through the mono-ADP-ribosylation of proteins involved in those processes. Acts as an inhibitor of protein translation by catalyzing mono-ADP-ribosylation of ribosomal subunits, such as RPL14 and RPS6, thereby inhibiting polysome assembly and mRNA loading. Mono-ADP-ribosylation of ribosomal subunits is promoted by NMNAT2. Involved in the unfolded protein response (UPR) by ADP-ribosylating and activating EIF2AK3 and ERN1, two important UPR effectors. May also mediate mono-ADP-ribosylation of karyopherin KPNB1 a nuclear import factor. May not modify proteins on arginine or cysteine residues compared to other mono-ADP-ribosyltransferases. This chain is Protein mono-ADP-ribosyltransferase PARP16, found in Homo sapiens (Human).